Here is a 644-residue protein sequence, read N- to C-terminus: Exoribonuclease 2 (644 aa).

The 328-residue stretch at 189–516 (REDLTALDFV…NHRLLKAVIK (328 aa)) folds into the RNB domain. The region spanning 561 to 643 (DTRFAAEIVD…ETRSIIARPV (83 aa)) is the S1 motif domain.

It belongs to the RNR ribonuclease family. RNase II subfamily.

It localises to the cytoplasm. It carries out the reaction Exonucleolytic cleavage in the 3'- to 5'-direction to yield nucleoside 5'-phosphates.. Functionally, involved in mRNA degradation. Hydrolyzes single-stranded polyribonucleotides processively in the 3' to 5' direction. This is Exoribonuclease 2 from Shigella boydii serotype 18 (strain CDC 3083-94 / BS512).